The chain runs to 332 residues: Adenosine deaminase (332 aa).

Zn(2+) is bound by residues histidine 12 and histidine 14. Substrate-binding residues include histidine 14, aspartate 16, and glycine 170. A Zn(2+)-binding site is contributed by histidine 197. Glutamate 200 acts as the Proton donor in catalysis. Zn(2+) is bound at residue aspartate 278.

This sequence belongs to the metallo-dependent hydrolases superfamily. Adenosine and AMP deaminases family. Adenosine deaminase subfamily. The cofactor is Zn(2+).

It catalyses the reaction adenosine + H2O + H(+) = inosine + NH4(+). The enzyme catalyses 2'-deoxyadenosine + H2O + H(+) = 2'-deoxyinosine + NH4(+). Its function is as follows. Catalyzes the hydrolytic deamination of adenosine and 2-deoxyadenosine. In Clostridium perfringens (strain 13 / Type A), this protein is Adenosine deaminase.